The primary structure comprises 373 residues: UDP-N-acetylglucosamine--N-acetylmuramyl-(pentapeptide) pyrophosphoryl-undecaprenol N-acetylglucosamine transferase (373 aa).

UDP-N-acetyl-alpha-D-glucosamine is bound by residues 10-12 (TGG), N124, S195, and Q297.

It belongs to the glycosyltransferase 28 family. MurG subfamily.

It is found in the cell membrane. It catalyses the reaction Mur2Ac(oyl-L-Ala-gamma-D-Glu-L-Lys-D-Ala-D-Ala)-di-trans,octa-cis-undecaprenyl diphosphate + UDP-N-acetyl-alpha-D-glucosamine = beta-D-GlcNAc-(1-&gt;4)-Mur2Ac(oyl-L-Ala-gamma-D-Glu-L-Lys-D-Ala-D-Ala)-di-trans,octa-cis-undecaprenyl diphosphate + UDP + H(+). It functions in the pathway cell wall biogenesis; peptidoglycan biosynthesis. Cell wall formation. Catalyzes the transfer of a GlcNAc subunit on undecaprenyl-pyrophosphoryl-MurNAc-pentapeptide (lipid intermediate I) to form undecaprenyl-pyrophosphoryl-MurNAc-(pentapeptide)GlcNAc (lipid intermediate II). The sequence is that of UDP-N-acetylglucosamine--N-acetylmuramyl-(pentapeptide) pyrophosphoryl-undecaprenol N-acetylglucosamine transferase from Oenococcus oeni (strain ATCC BAA-331 / PSU-1).